We begin with the raw amino-acid sequence, 295 residues long: 3-methyl-2-oxobutanoate hydroxymethyltransferase (295 aa).

A disordered region spans residues 1–30 (MTSGRAMSPEETAPYGTGPARAESAPDAPA). Residues Asp-76 and Asp-115 each contribute to the Mg(2+) site. 3-methyl-2-oxobutanoate is bound by residues 76–77 (DS), Asp-115, and Lys-145. Residue Glu-147 coordinates Mg(2+). Glu-213 acts as the Proton acceptor in catalysis.

Belongs to the PanB family. In terms of assembly, homodecamer; pentamer of dimers. Mg(2+) serves as cofactor.

Its subcellular location is the cytoplasm. The catalysed reaction is 3-methyl-2-oxobutanoate + (6R)-5,10-methylene-5,6,7,8-tetrahydrofolate + H2O = 2-dehydropantoate + (6S)-5,6,7,8-tetrahydrofolate. The protein operates within cofactor biosynthesis; (R)-pantothenate biosynthesis; (R)-pantoate from 3-methyl-2-oxobutanoate: step 1/2. In terms of biological role, catalyzes the reversible reaction in which hydroxymethyl group from 5,10-methylenetetrahydrofolate is transferred onto alpha-ketoisovalerate to form ketopantoate. This Nocardioides sp. (strain ATCC BAA-499 / JS614) protein is 3-methyl-2-oxobutanoate hydroxymethyltransferase.